We begin with the raw amino-acid sequence, 200 residues long: Somatotropin (200 aa).

Residues 1-22 (MARVLVLLSVVVASLLFSQGAT) form the signal peptide. H38 provides a ligand contact to Zn(2+). C71 and C173 are oxidised to a cystine. Position 182 (E182) interacts with Zn(2+). Cysteines 190 and 198 form a disulfide.

Belongs to the somatotropin/prolactin family.

Its subcellular location is the secreted. Its function is as follows. Growth hormone plays an important role in growth control and is involved in the regulation of several anabolic processes. Implicated as an osmoregulatory substance important for seawater adaptation. This Ictalurus punctatus (Channel catfish) protein is Somatotropin (gh).